Reading from the N-terminus, the 920-residue chain is Probable helicase HelY (920 aa).

Residues 26-184 (CAALERGHGV…WVQTVRGDTT (159 aa)) form the Helicase ATP-binding domain. An ATP-binding site is contributed by 39–46 (APTGAGKT). Residues 132 to 135 (DEVH) carry the DEVH box motif. In terms of domain architecture, Helicase C-terminal spans 265–469 (EVIAILDAEG…SYNMTINLVH (205 aa)).

This sequence belongs to the helicase family. SKI2 subfamily.

The chain is Probable helicase HelY (helY) from Mycobacterium leprae (strain TN).